A 401-amino-acid polypeptide reads, in one-letter code: Beta-ketoadipyl-CoA thiolase (401 aa).

Cys90 serves as the catalytic Acyl-thioester intermediate. Residues His357 and Cys387 each act as proton acceptor in the active site.

Belongs to the thiolase-like superfamily. Thiolase family.

The catalysed reaction is succinyl-CoA + acetyl-CoA = 3-oxoadipyl-CoA + CoA. It functions in the pathway aromatic compound metabolism; phenylacetate degradation. In terms of biological role, catalyzes thiolytic cleavage of beta-ketoadipyl-CoA to succinyl-CoA and acetyl-CoA. In Escherichia coli, this protein is Beta-ketoadipyl-CoA thiolase (paaJ).